The sequence spans 570 residues: Nucleoprotein (570 aa).

A binding site for the cap structure m7GTP region spans residues 54-241; it reads MRKQKRDDGD…IDTKKSSLNI (188 aa). 2 residues coordinate Mn(2+): Asp-390 and Glu-392. Zn(2+) contacts are provided by Glu-400, Cys-507, His-510, and Cys-530. Asp-534 lines the Mn(2+) pocket.

This sequence belongs to the arenaviridae nucleocapsid protein family. In terms of assembly, homomultimerizes to form the nucleocapsid. Binds to viral genomic RNA. Interacts with glycoprotein G2. Interacts with protein Z; this interaction probably directs the encapsidated genome to budding sites. Interacts with protein L; this interaction does not interfere with Z-L interaction. Interacts with host IKBKE (via Protein kinase domain); the interaction inhibits IKBKE kinase activity.

Its subcellular location is the virion. It localises to the host cytoplasm. Functionally, encapsidates the genome, protecting it from nucleases. The encapsidated genomic RNA is termed the nucleocapsid (NC). Serves as template for viral transcription and replication. The increased presence of protein N in host cell does not seem to trigger the switch from transcription to replication as observed in other negative strain RNA viruses. Through the interaction with host IKBKE, strongly inhibits the phosphorylation and nuclear translocation of host IRF3, a protein involved in interferon activation pathway, leading to the inhibition of interferon-beta and IRF3-dependent promoters activation. Also encodes a functional 3'-5' exoribonuclease that degrades preferentially dsRNA substrates and thereby participates in the suppression of interferon induction. This chain is Nucleoprotein, found in Homo sapiens (Human).